A 242-amino-acid polypeptide reads, in one-letter code: Small ribosomal subunit protein uS2 (242 aa).

Belongs to the universal ribosomal protein uS2 family.

This is Small ribosomal subunit protein uS2 from Vibrio parahaemolyticus serotype O3:K6 (strain RIMD 2210633).